Reading from the N-terminus, the 456-residue chain is GTPase Der (456 aa).

2 consecutive EngA-type G domains span residues proline 4–aspartate 169 and valine 178–arginine 353. Residues glycine 10 to serine 17, aspartate 57 to leucine 61, asparagine 120 to glutamate 123, glycine 184 to serine 191, aspartate 231 to isoleucine 235, and asparagine 296 to aspartate 299 each bind GTP. One can recognise a KH-like domain in the interval arginine 354–glutamine 439.

Belongs to the TRAFAC class TrmE-Era-EngA-EngB-Septin-like GTPase superfamily. EngA (Der) GTPase family. As to quaternary structure, associates with the 50S ribosomal subunit.

GTPase that plays an essential role in the late steps of ribosome biogenesis. The polypeptide is GTPase Der (Prochlorococcus marinus (strain NATL2A)).